We begin with the raw amino-acid sequence, 212 residues long: ATP-dependent Clp protease proteolytic subunit (212 aa).

Catalysis depends on S114, which acts as the Nucleophile. H139 is a catalytic residue.

Belongs to the peptidase S14 family. As to quaternary structure, fourteen ClpP subunits assemble into 2 heptameric rings which stack back to back to give a disk-like structure with a central cavity, resembling the structure of eukaryotic proteasomes.

It localises to the cytoplasm. The enzyme catalyses Hydrolysis of proteins to small peptides in the presence of ATP and magnesium. alpha-casein is the usual test substrate. In the absence of ATP, only oligopeptides shorter than five residues are hydrolyzed (such as succinyl-Leu-Tyr-|-NHMec, and Leu-Tyr-Leu-|-Tyr-Trp, in which cleavage of the -Tyr-|-Leu- and -Tyr-|-Trp bonds also occurs).. In terms of biological role, cleaves peptides in various proteins in a process that requires ATP hydrolysis. Has a chymotrypsin-like activity. Plays a major role in the degradation of misfolded proteins. This Azoarcus sp. (strain BH72) protein is ATP-dependent Clp protease proteolytic subunit.